Here is a 140-residue protein sequence, read N- to C-terminus: uncharacterized protein (140 aa).

2 helical membrane passes run 4 to 21 and 26 to 48; these read ILKFGILGFGAIFGYLFG and LVKVLVCFIVADYISGLLASGYL.

Belongs to the bacteriophage holin family. Cp-1 holin subfamily.

The protein localises to the cell membrane. This is an uncharacterized protein from Listeria monocytogenes serovar 1/2a (strain ATCC BAA-679 / EGD-e).